Consider the following 347-residue polypeptide: NADH-ubiquinone oxidoreductase chain 2 (347 aa).

A run of 11 helical transmembrane segments spans residues 3-23, 25-45, 59-79, 96-116, 122-142, 149-169, 178-198, 200-220, 240-260, 274-294, and 326-346; these read PMTSTILLMTIMSGTSIVLMS, HWFMTWLGFEMNMMAIIPILM, YFLTQATASMILVLAIIINLM, TLITIALVMKLGLAPFHFWVP, VSLSSGLILLTWQKIAPLSLL, INTNLLLTMSLLSIMIGGWGG, IMAYSSIAHMGWMIVIMIYNP, LSLLNLFIYIMMTSSMFMLLI, ITTMMMATLLSLGGLPPLTGF, NSVILPTLMAILALLNLFFYM, and MTMLISISTLALPLTPLFISL.

It belongs to the complex I subunit 2 family. As to quaternary structure, core subunit of respiratory chain NADH dehydrogenase (Complex I) which is composed of 45 different subunits. Interacts with TMEM242.

Its subcellular location is the mitochondrion inner membrane. It carries out the reaction a ubiquinone + NADH + 5 H(+)(in) = a ubiquinol + NAD(+) + 4 H(+)(out). In terms of biological role, core subunit of the mitochondrial membrane respiratory chain NADH dehydrogenase (Complex I) which catalyzes electron transfer from NADH through the respiratory chain, using ubiquinone as an electron acceptor. Essential for the catalytic activity and assembly of complex I. The chain is NADH-ubiquinone oxidoreductase chain 2 from Sylvisorex granti (Grant's forest shrew).